The following is a 121-amino-acid chain: Small ribosomal subunit protein uS13 (121 aa).

A disordered region spans residues 89 to 121 (MRHRRGLPVRGQNTKNNARTRKGKKVSIAGKKK). Over residues 106-121 (ARTRKGKKVSIAGKKK) the composition is skewed to basic residues.

It belongs to the universal ribosomal protein uS13 family. Part of the 30S ribosomal subunit. Forms a loose heterodimer with protein S19. Forms two bridges to the 50S subunit in the 70S ribosome.

Its function is as follows. Located at the top of the head of the 30S subunit, it contacts several helices of the 16S rRNA. In the 70S ribosome it contacts the 23S rRNA (bridge B1a) and protein L5 of the 50S subunit (bridge B1b), connecting the 2 subunits; these bridges are implicated in subunit movement. Contacts the tRNAs in the A and P-sites. In Latilactobacillus sakei subsp. sakei (strain 23K) (Lactobacillus sakei subsp. sakei), this protein is Small ribosomal subunit protein uS13.